Consider the following 370-residue polypeptide: Putrescine-binding periplasmic protein PotF (370 aa).

Residues 1–26 form the signal peptide; that stretch reads MTALNKKWLSGLVAGALMAVSVGTLA. Ser-38 contributes to the putrescine binding site. A disulfide bridge links Cys-175 with Cys-239. Residues Asp-247 and Asp-278 each contribute to the putrescine site.

It belongs to the bacterial solute-binding protein PotD/PotF family. In terms of assembly, the complex is composed of two ATP-binding proteins (PotG), two transmembrane proteins (PotH and PotI) and a solute-binding protein (PotF).

The protein resides in the periplasm. Its activity is regulated as follows. Transport is feedback inhibited by intracellular polyamines. Part of the ABC transporter complex PotFGHI involved in putrescine uptake. Binds putrescine. Imports putrescine for maintenance of the optimal concentration of polyamines necessary for cell growth in the presence of glucose. The polypeptide is Putrescine-binding periplasmic protein PotF (Escherichia coli (strain K12)).